The following is a 545-amino-acid chain: Glucose-6-phosphate isomerase (545 aa).

The active-site Proton donor is the E349. Residues H380 and K509 contribute to the active site.

The protein belongs to the GPI family.

It is found in the cytoplasm. It carries out the reaction alpha-D-glucose 6-phosphate = beta-D-fructose 6-phosphate. Its pathway is carbohydrate biosynthesis; gluconeogenesis. It participates in carbohydrate degradation; glycolysis; D-glyceraldehyde 3-phosphate and glycerone phosphate from D-glucose: step 2/4. Catalyzes the reversible isomerization of glucose-6-phosphate to fructose-6-phosphate. This is Glucose-6-phosphate isomerase from Chelativorans sp. (strain BNC1).